The following is a 241-amino-acid chain: ATP-dependent Clp protease ATP-binding subunit CLPT2, chloroplastic (241 aa).

Residues 1-75 (MAAHSSCNFA…PRRIHKSAIS (75 aa)) constitute a chloroplast transit peptide. The Clp R domain occupies 91 to 237 (KPKWSWRAIK…ELESFASESG (147 aa)). 2 repeat regions span residues 94 to 159 (WSWR…LGKA) and 171 to 237 (LTED…SESG).

The protein belongs to the ClpA/ClpB family. As to quaternary structure, monomer and homodimer. The dimers monomerize before association to the P-ring. Component of the chloroplastic Clp protease core complex which consist of at least 16 proteins: CLPP4 (3 copies), CLPP5 (3 copies), CLPR4 (2 copies), ClpP1 (1 copy), CLPP6 (1 copy), CLPR2 (1 copy), CLPT1 (1 copy), CLPT2 (1 copy) and 3 copies of CLPP3 and/or CLPR1 and/or CLPR3. Interacts with AHK2. Interacts with CPN21. No interactions with CLPS1.

The protein localises to the plastid. Its subcellular location is the chloroplast. In terms of biological role, accessory protein regulating the assembly of the plastidial Clp protease system. CLPT1 first binds to the heptameric P-ring containing the CLP3-6 subunits followed by CLPT2, and only then does the P-ring combine with the R-ring composed of the clpP1 and CLPR1-4 subunits. Once the core complex is fully assembled, it then associates to the CLPC chaperone partner to form the functional protease. CLPT2 and CLPT1 are partially redundant. The protein is ATP-dependent Clp protease ATP-binding subunit CLPT2, chloroplastic of Arabidopsis thaliana (Mouse-ear cress).